Consider the following 551-residue polypeptide: Rqc2 homolog RqcH (551 aa).

The required for fibronectin binding stretch occupies residues 363–551; the sequence is YQKLKEAVKY…SKKIASMKKS (189 aa).

This sequence belongs to the NEMF family. In terms of assembly, associates with stalled 50S ribosomal subunits, binds to RqcP. Interacts with human fibronectin.

Its subcellular location is the cell surface. It is found in the cytoplasm. In terms of biological role, key component of the ribosome quality control system (RQC), a ribosome-associated complex that mediates the extraction of incompletely synthesized nascent chains from stalled ribosomes and their subsequent degradation. RqcH recruits Ala-charged tRNA, and with RqcP directs the elongation of stalled nascent chains on 50S ribosomal subunits, leading to non-templated C-terminal alanine extensions (Ala tail). The Ala tail promotes nascent chain degradation. May add between 1 and at least 8 Ala residues. Binds to stalled 50S ribosomal subunits. Functionally, recombinant protein binds to immobilized human fibronectin; binding is saturable and competed by heparin. Recombinant protein inhibits binding of whole cells to fibronectin. In Streptococcus pneumoniae (strain ATCC BAA-255 / R6), this protein is Rqc2 homolog RqcH.